Reading from the N-terminus, the 501-residue chain is MTAAFYDLMDFDEVLEKYDPVMGLEVHVELGTETKMFSASSAHFGAEPNSNVDPVSLGLPGALPVVNAKGVEWAIKIGLALNCSIAESSRFARKNYFYPDQPKNYQISQYDEPIAYDGYLDVVLEDGTEWRVEIERAHMEEDTGKLTHLGGTSGRIHGATASLVDCNRAGIPLIEVVTKPIEGAGARAPEIAKAYVSALRDLVKALGVSDGRLDQGSMRVDANLSLRPIGQEEFGTRTETKNINSLKSVEQAITFEMQRQAQVLDDGGVIDQETRHYQEADGSTSKGRPKETAEDYRYFNDPDLPPVIAPREWVEEIRATLPELPWVRRARIQEEWKLSDAEMRDLINANALDLIIETVEAGTTPDEARAWWVSYISQKANESGVELDALGVAPAHVARVVALVSEGKLTNKLARQAIDGVIAGEGDVDAVVAARGLEVVRDDGAIEKAVDEALAANPDIVEKYRAGNTKVTGAIVGAVMKATRGKADPAQVNQLIAKKLA.

Residues H276–F299 form a disordered region. Residues R288–F299 are compositionally biased toward basic and acidic residues.

This sequence belongs to the GatB/GatE family. GatB subfamily. Heterotrimer of A, B and C subunits.

It catalyses the reaction L-glutamyl-tRNA(Gln) + L-glutamine + ATP + H2O = L-glutaminyl-tRNA(Gln) + L-glutamate + ADP + phosphate + H(+). The catalysed reaction is L-aspartyl-tRNA(Asn) + L-glutamine + ATP + H2O = L-asparaginyl-tRNA(Asn) + L-glutamate + ADP + phosphate + 2 H(+). Its function is as follows. Allows the formation of correctly charged Asn-tRNA(Asn) or Gln-tRNA(Gln) through the transamidation of misacylated Asp-tRNA(Asn) or Glu-tRNA(Gln) in organisms which lack either or both of asparaginyl-tRNA or glutaminyl-tRNA synthetases. The reaction takes place in the presence of glutamine and ATP through an activated phospho-Asp-tRNA(Asn) or phospho-Glu-tRNA(Gln). The polypeptide is Aspartyl/glutamyl-tRNA(Asn/Gln) amidotransferase subunit B (Corynebacterium glutamicum (strain R)).